A 443-amino-acid polypeptide reads, in one-letter code: Structure-specific endonuclease subunit SLX1 (443 aa).

One can recognise a GIY-YIG domain in the interval 13–93; that stretch reads RVYVCYCLRS…QKPHASRHLR (81 aa). The disordered stretch occupies residues 121–140; the sequence is FPATRSSAPSSAASHDSGLN. The segment at 361–419 adopts an SLX1-type zinc-finger fold; it reads CGLCGGHINRHVPLSYTHCPHACDAVFHLTCLARYSLEQETRAHARTFCLPTSAWCPMC.

Belongs to the SLX1 family. In terms of assembly, forms a heterodimer with SLX4. The cofactor is a divalent metal cation.

It is found in the nucleus. Functionally, catalytic subunit of the SLX1-SLX4 structure-specific endonuclease that resolves DNA secondary structures generated during DNA repair and recombination. Has endonuclease activity towards branched DNA substrates, introducing single-strand cuts in duplex DNA close to junctions with ss-DNA. The sequence is that of Structure-specific endonuclease subunit SLX1 from Malassezia globosa (strain ATCC MYA-4612 / CBS 7966) (Dandruff-associated fungus).